The following is a 355-amino-acid chain: Phenylalanine--tRNA ligase alpha subunit (355 aa).

Glutamate 273 serves as a coordination point for Mg(2+).

Belongs to the class-II aminoacyl-tRNA synthetase family. Phe-tRNA synthetase alpha subunit type 1 subfamily. Tetramer of two alpha and two beta subunits. The cofactor is Mg(2+).

Its subcellular location is the cytoplasm. It carries out the reaction tRNA(Phe) + L-phenylalanine + ATP = L-phenylalanyl-tRNA(Phe) + AMP + diphosphate + H(+). This chain is Phenylalanine--tRNA ligase alpha subunit, found in Bifidobacterium longum subsp. infantis (strain ATCC 15697 / DSM 20088 / JCM 1222 / NCTC 11817 / S12).